We begin with the raw amino-acid sequence, 133 residues long: Large ribosomal subunit protein uL16 (133 aa).

Belongs to the universal ribosomal protein uL16 family. Part of the 50S ribosomal subunit.

Binds 23S rRNA and is also seen to make contacts with the A and possibly P site tRNAs. This Blochmanniella floridana protein is Large ribosomal subunit protein uL16.